Reading from the N-terminus, the 160-residue chain is Cyclic pyranopterin monophosphate synthase (160 aa).

Substrate contacts are provided by residues 77–79 (MCH) and 114–115 (ME). D129 is a catalytic residue.

Belongs to the MoaC family. In terms of assembly, homohexamer; trimer of dimers.

It catalyses the reaction (8S)-3',8-cyclo-7,8-dihydroguanosine 5'-triphosphate = cyclic pyranopterin phosphate + diphosphate. It functions in the pathway cofactor biosynthesis; molybdopterin biosynthesis. Catalyzes the conversion of (8S)-3',8-cyclo-7,8-dihydroguanosine 5'-triphosphate to cyclic pyranopterin monophosphate (cPMP). The sequence is that of Cyclic pyranopterin monophosphate synthase from Listeria monocytogenes serovar 1/2a (strain ATCC BAA-679 / EGD-e).